Here is a 1041-residue protein sequence, read N- to C-terminus: Histone deacetylase complex subunit SAP130-B (1041 aa).

5 disordered regions span residues 1–62 (MSSQ…QEPV), 111–131 (KSTM…SAVP), 572–592 (TNQG…EPKS), 614–769 (TPAG…PSGA), and 806–852 (VLAN…DEER). Over residues 18 to 30 (VSNSGASVGQNVQ) the composition is skewed to polar residues. A compositionally biased stretch (basic and acidic residues) spans 33 to 42 (EVAREIDVQS). Over residues 576 to 592 (VQTSSVSSQQASSEPKS) the composition is skewed to low complexity. Over residues 614–641 (TPAGTTVMQSHSQSPGIGSSPAQGSSPR) the composition is skewed to polar residues. The segment covering 707–728 (PGAADQPSAAASLPSSHHPTAA) has biased composition (low complexity).

This sequence belongs to the SAP130 family.

The protein resides in the nucleus. In terms of biological role, acts as a transcriptional repressor. In Xenopus laevis (African clawed frog), this protein is Histone deacetylase complex subunit SAP130-B (sap130-b).